Consider the following 678-residue polypeptide: ABC transporter G family member 13 (678 aa).

An ABC transporter domain is found at 10 to 254 (VAWEDLTVVI…FGEAGFPCPS (245 aa)). 48–55 (GPSGSGKS) provides a ligand contact to ATP. Residues 355–567 (KQLRILTQRS…ALQGAYKNEM (213 aa)) enclose the ABC transmembrane type-2 domain. The next 6 helical transmembrane spans lie at 374-394 (YYWMRIAVYIVLSICVGSIFF), 409-429 (CGGFMAGFMTFMSIGGFQSFI), 446-466 (VAVYTVSNLLSSLPFIILMCL), 490-510 (LDLICAITTVESCMMMIASVV), 513-533 (FLMGVMLGAGYIGIMVLSAGF), and 602-622 (LDLAVVMMILIGYRIAFFAIL). Ser658 bears the Phosphoserine mark.

It belongs to the ABC transporter superfamily. ABCG family. Eye pigment precursor importer (TC 3.A.1.204) subfamily.

The protein localises to the membrane. This chain is ABC transporter G family member 13 (ABCG13), found in Arabidopsis thaliana (Mouse-ear cress).